The following is a 122-amino-acid chain: Large ribosomal subunit protein uL14 (122 aa).

The protein belongs to the universal ribosomal protein uL14 family. Part of the 50S ribosomal subunit. Forms a cluster with proteins L3 and L19. In the 70S ribosome, L14 and L19 interact and together make contacts with the 16S rRNA in bridges B5 and B8.

In terms of biological role, binds to 23S rRNA. Forms part of two intersubunit bridges in the 70S ribosome. The chain is Large ribosomal subunit protein uL14 from Stenotrophomonas maltophilia (strain R551-3).